An 84-amino-acid chain; its full sequence is U2-theraphotoxin-Cg1b 1 (84 aa).

Residues 1 to 21 (MKVSVLITLAVWGVMFLLTSA) form the signal peptide. Positions 22–48 (QERGSDQMDSPAWLKSMERIFQSEERE) are excised as a propeptide. Intrachain disulfides connect C49-C63, C56-C68, and C62-C76.

The protein belongs to the neurotoxin 10 (Hwtx-1) family. 06 (F4b) subfamily. In terms of tissue distribution, expressed by the venom gland.

It localises to the secreted. Functionally, probable ion channel inhibitor. The sequence is that of U2-theraphotoxin-Cg1b 1 from Chilobrachys guangxiensis (Chinese earth tiger tarantula).